The following is a 115-amino-acid chain: Large ribosomal subunit protein bL19 (115 aa).

Belongs to the bacterial ribosomal protein bL19 family.

In terms of biological role, this protein is located at the 30S-50S ribosomal subunit interface and may play a role in the structure and function of the aminoacyl-tRNA binding site. In Wigglesworthia glossinidia brevipalpis, this protein is Large ribosomal subunit protein bL19.